The primary structure comprises 447 residues: N-succinylarginine dihydrolase (447 aa).

Substrate is bound by residues 19 to 28, Asn110, and 137 to 138; these read AGLSFGNEAS and HR. The active site involves Glu174. Arg214 serves as a coordination point for substrate. His250 is a catalytic residue. Substrate is bound by residues Asp252 and Asn365. The active-site Nucleophile is Cys371.

The protein belongs to the succinylarginine dihydrolase family. Homodimer.

It catalyses the reaction N(2)-succinyl-L-arginine + 2 H2O + 2 H(+) = N(2)-succinyl-L-ornithine + 2 NH4(+) + CO2. Its pathway is amino-acid degradation; L-arginine degradation via AST pathway; L-glutamate and succinate from L-arginine: step 2/5. Its function is as follows. Catalyzes the hydrolysis of N(2)-succinylarginine into N(2)-succinylornithine, ammonia and CO(2). The chain is N-succinylarginine dihydrolase from Acinetobacter baumannii (strain ATCC 17978 / DSM 105126 / CIP 53.77 / LMG 1025 / NCDC KC755 / 5377).